A 237-amino-acid polypeptide reads, in one-letter code: Proteasome subunit beta 2 (237 aa).

Residues 1 to 14 show a composition bias toward polar residues; that stretch reads MNNWSQGSTPQGSD. Positions 1–42 are cleaved as a propeptide — removed in mature form; by autocatalysis; the sequence is MNNWSQGSTPQGSDPSPYAPELGSLPDGSQSDDHGDTVNKTG. Residues 1–45 are disordered; sequence MNNWSQGSTPQGSDPSPYAPELGSLPDGSQSDDHGDTVNKTGTTT. Catalysis depends on T43, which acts as the Nucleophile.

The protein belongs to the peptidase T1B family. As to quaternary structure, the 20S proteasome core is composed of 14 alpha and 14 beta subunits that assemble into four stacked heptameric rings, resulting in a barrel-shaped structure. The two inner rings, each composed of seven catalytic beta subunits, are sandwiched by two outer rings, each composed of seven alpha subunits. The catalytic chamber with the active sites is on the inside of the barrel. Has a gated structure, the ends of the cylinder being occluded by the N-termini of the alpha-subunits. Is capped at one or both ends by the proteasome regulatory ATPase, PAN.

The protein resides in the cytoplasm. It catalyses the reaction Cleavage of peptide bonds with very broad specificity.. With respect to regulation, the formation of the proteasomal ATPase PAN-20S proteasome complex, via the docking of the C-termini of PAN into the intersubunit pockets in the alpha-rings, triggers opening of the gate for substrate entry. Interconversion between the open-gate and close-gate conformations leads to a dynamic regulation of the 20S proteasome proteolysis activity. Functionally, component of the proteasome core, a large protease complex with broad specificity involved in protein degradation. This Haloterrigena turkmenica (strain ATCC 51198 / DSM 5511 / JCM 9101 / NCIMB 13204 / VKM B-1734 / 4k) (Halococcus turkmenicus) protein is Proteasome subunit beta 2.